Here is a 411-residue protein sequence, read N- to C-terminus: MTDGPIKVNSEIGALKTVLLKRPGKELENLVPDYLDGLLFDDIPYLEVAQKEHDHFAQVLREEGVEVLYLEKLAAESIENPQVRSEFIDDVLAESKKTILGHEEEIKTLFATLSNQELVDKIMSGVRKEEINPKCTHLVEYMDDKYPFYLDPMPNLYFTRDPQASIGHGITINRMFWRARRRESIFIQYIVKHHPRFKDANIPIWLDRDCPFNIEGGDELVLSKDVLAIGVSERTSAQAIEKLARRIFENPQATFKKVVAIEIPTSRTFMHLDTVFTMIDYDKFTMHSAILKAEGNMNIFIIEYDDVNKDIAIKQSSHLKDTLEDVLGIDDIQFIPTGNGDVIDGAREQWNDGSNTLCIRPGVVVTYDRNYVSNDLLRQKGIKVIEISGSELVRGRGGPRCMSQPLFREDI.

The active-site Amidino-cysteine intermediate is the C401.

It belongs to the arginine deiminase family.

The protein resides in the cytoplasm. The catalysed reaction is L-arginine + H2O = L-citrulline + NH4(+). Its pathway is amino-acid degradation; L-arginine degradation via ADI pathway; carbamoyl phosphate from L-arginine: step 1/2. This chain is Arginine deiminase, found in Staphylococcus aureus (strain JH9).